A 1253-amino-acid chain; its full sequence is Guanine nucleotide exchange factor SDC25 (1253 aa).

The 73-residue stretch at Q26–N98 folds into the SH3 domain. The interval L624–E649 is disordered. The 133-residue stretch at G782–F914 folds into the N-terminal Ras-GEF domain. One can recognise a Ras-GEF domain in the interval V952–P1199. The segment at R1202–K1253 is disordered. Positions S1215–P1237 are enriched in basic and acidic residues. The segment covering Q1240–K1253 has biased composition (basic residues).

In terms of biological role, promotes the exchange of Ras-bound GDP by GTP. The chain is Guanine nucleotide exchange factor SDC25 (SDC25) from Saccharomyces cerevisiae (Baker's yeast).